The chain runs to 833 residues: Ventricular zone-expressed PH domain-containing protein 1 (833 aa).

Interaction with TGFBR1 regions lie at residues 201–319 and 663–833; these read AELL…LANM and ESTF…TTYL. The PH domain maps to 716–819; that stretch reads QPLIEGKLKE…WLQCINVALA (104 aa).

It belongs to the MELT/VEPH family. As to quaternary structure, interacts with TGFBR1. In terms of tissue distribution, specifically expressed in kidney and eye. In the eye, expressed in retinal pigmented epithelium but not in the neural retina.

It is found in the cell membrane. In terms of biological role, interacts with TGF-beta receptor type-1 (TGFBR1) and inhibits dissociation of activated SMAD2 from TGFBR1, impeding its nuclear accumulation and resulting in impaired TGF-beta signaling. May also affect FOXO, Hippo and Wnt signaling. This Mus musculus (Mouse) protein is Ventricular zone-expressed PH domain-containing protein 1 (Veph1).